We begin with the raw amino-acid sequence, 297 residues long: Protein phosphatase PTC7 homolog (297 aa).

The N-terminal 27 residues, 1 to 27, are a transit peptide targeting the mitochondrion; that stretch reads MFSVLSCGRLVARAVFGGLSQTDSRDY. Positions 28 to 292 constitute a PPM-type phosphatase domain; sequence SLVTASCGFG…DDITVLLSIV (265 aa). Residues aspartate 71, glycine 72, and aspartate 216 each contribute to the Mn(2+) site.

The protein belongs to the PP2C family. Mg(2+) serves as cofactor. Mn(2+) is required as a cofactor.

It localises to the mitochondrion matrix. It carries out the reaction O-phospho-L-seryl-[protein] + H2O = L-seryl-[protein] + phosphate. The catalysed reaction is O-phospho-L-threonyl-[protein] + H2O = L-threonyl-[protein] + phosphate. In terms of biological role, protein phosphatase which positively regulates biosynthesis of the ubiquinone, coenzyme Q. Dephosphorylates the ubiquinone biosynthesis protein coq7 which is likely to lead to its activation. The chain is Protein phosphatase PTC7 homolog (pptc7) from Xenopus laevis (African clawed frog).